The sequence spans 621 residues: tRNA uridine 5-carboxymethylaminomethyl modification enzyme MnmG (621 aa).

Residue 8-13 (GAGHAG) coordinates FAD. Positions 199-227 (PRIDRRSVDYSRVEEQKGDENPPPFSFST) are disordered. The span at 200–218 (RIDRRSVDYSRVEEQKGDE) shows a compositional bias: basic and acidic residues. An NAD(+)-binding site is contributed by 269 to 283 (GPRYCPSIEDKIFRF).

It belongs to the MnmG family. As to quaternary structure, homodimer. Heterotetramer of two MnmE and two MnmG subunits. Requires FAD as cofactor.

Its subcellular location is the cytoplasm. Its function is as follows. NAD-binding protein involved in the addition of a carboxymethylaminomethyl (cmnm) group at the wobble position (U34) of certain tRNAs, forming tRNA-cmnm(5)s(2)U34. This is tRNA uridine 5-carboxymethylaminomethyl modification enzyme MnmG from Chlorobium luteolum (strain DSM 273 / BCRC 81028 / 2530) (Pelodictyon luteolum).